The sequence spans 80 residues: ATP synthase subunit c (80 aa).

Transmembrane regions (helical) follow at residues 11–31 (IAAT…IGIL) and 54–74 (FIVM…GLYI).

This sequence belongs to the ATPase C chain family. F-type ATPases have 2 components, F(1) - the catalytic core - and F(0) - the membrane proton channel. F(1) has five subunits: alpha(3), beta(3), gamma(1), delta(1), epsilon(1). F(0) has three main subunits: a(1), b(2) and c(10-14). The alpha and beta chains form an alternating ring which encloses part of the gamma chain. F(1) is attached to F(0) by a central stalk formed by the gamma and epsilon chains, while a peripheral stalk is formed by the delta and b chains.

The protein localises to the cell membrane. Its function is as follows. F(1)F(0) ATP synthase produces ATP from ADP in the presence of a proton or sodium gradient. F-type ATPases consist of two structural domains, F(1) containing the extramembraneous catalytic core and F(0) containing the membrane proton channel, linked together by a central stalk and a peripheral stalk. During catalysis, ATP synthesis in the catalytic domain of F(1) is coupled via a rotary mechanism of the central stalk subunits to proton translocation. Functionally, key component of the F(0) channel; it plays a direct role in translocation across the membrane. A homomeric c-ring of between 10-14 subunits forms the central stalk rotor element with the F(1) delta and epsilon subunits. This chain is ATP synthase subunit c, found in Baumannia cicadellinicola subsp. Homalodisca coagulata.